We begin with the raw amino-acid sequence, 411 residues long: Acetylornithine aminotransferase (411 aa).

Residues 107–108 (GT) and Phe-141 each bind pyridoxal 5'-phosphate. Arg-144 contributes to the N(2)-acetyl-L-ornithine binding site. 227–230 (DEIQ) is a pyridoxal 5'-phosphate binding site. Lys-256 bears the N6-(pyridoxal phosphate)lysine mark. Thr-284 contributes to the N(2)-acetyl-L-ornithine binding site. Residue Thr-285 participates in pyridoxal 5'-phosphate binding.

The protein belongs to the class-III pyridoxal-phosphate-dependent aminotransferase family. ArgD subfamily. As to quaternary structure, homodimer. It depends on pyridoxal 5'-phosphate as a cofactor.

The protein localises to the cytoplasm. It catalyses the reaction N(2)-acetyl-L-ornithine + 2-oxoglutarate = N-acetyl-L-glutamate 5-semialdehyde + L-glutamate. The protein operates within amino-acid biosynthesis; L-arginine biosynthesis; N(2)-acetyl-L-ornithine from L-glutamate: step 4/4. This chain is Acetylornithine aminotransferase, found in Xylella fastidiosa (strain 9a5c).